The following is a 208-amino-acid chain: dITP/XTP pyrophosphatase (208 aa).

Position 15 to 20 (15 to 20 (SHNAGK)) interacts with substrate. Mg(2+) contacts are provided by Glu-47 and Asp-76. Asp-76 serves as the catalytic Proton acceptor. Substrate contacts are provided by residues Ser-77, 157-160 (HGYD), Lys-180, and 185-186 (HR).

Belongs to the HAM1 NTPase family. In terms of assembly, homodimer. Mg(2+) is required as a cofactor.

It catalyses the reaction XTP + H2O = XMP + diphosphate + H(+). The catalysed reaction is dITP + H2O = dIMP + diphosphate + H(+). It carries out the reaction ITP + H2O = IMP + diphosphate + H(+). Functionally, pyrophosphatase that catalyzes the hydrolysis of nucleoside triphosphates to their monophosphate derivatives, with a high preference for the non-canonical purine nucleotides XTP (xanthosine triphosphate), dITP (deoxyinosine triphosphate) and ITP. Seems to function as a house-cleaning enzyme that removes non-canonical purine nucleotides from the nucleotide pool, thus preventing their incorporation into DNA/RNA and avoiding chromosomal lesions. This chain is dITP/XTP pyrophosphatase, found in Gluconobacter oxydans (strain 621H) (Gluconobacter suboxydans).